The following is a 185-amino-acid chain: Elongation factor P (185 aa).

The protein belongs to the elongation factor P family.

The protein resides in the cytoplasm. The protein operates within protein biosynthesis; polypeptide chain elongation. Its function is as follows. Involved in peptide bond synthesis. Stimulates efficient translation and peptide-bond synthesis on native or reconstituted 70S ribosomes in vitro. Probably functions indirectly by altering the affinity of the ribosome for aminoacyl-tRNA, thus increasing their reactivity as acceptors for peptidyl transferase. This chain is Elongation factor P, found in Oceanobacillus iheyensis (strain DSM 14371 / CIP 107618 / JCM 11309 / KCTC 3954 / HTE831).